Consider the following 575-residue polypeptide: Manganese transporter SMF1 (575 aa).

At 1 to 70 the chain is on the extracellular side; the sequence is MVNVGPSHAA…TYVSKRQVMR (70 aa). Phosphoserine is present on Ser-24. Residues Lys-33 and Lys-34 each participate in a glycyl lysine isopeptide (Lys-Gly) (interchain with G-Cter in ubiquitin) cross-link. A helical transmembrane segment spans residues 71 to 91; it reads DIFAKYLKFIGPGLMVSVAYI. Topologically, residues 92-108 are cytoplasmic; it reads DPGNYSTAVDAGASNQF. A helical membrane pass occupies residues 109-129; the sequence is SLLCIILLSNFIAIFLQCLCI. Residues 130-156 are Extracellular-facing; it reads KLGSVTGLDLSRACREYLPRWLNWTLY. Residues 157-177 form a helical membrane-spanning segment; that stretch reads FFAECAVIATDIAEVIGTAIA. The Cytoplasmic segment spans residues 178-179; that stretch reads LN. Residues 180 to 200 traverse the membrane as a helical segment; it reads ILIKVPLPAGVAITVVDVFLI. Residues 201–218 lie on the Extracellular side of the membrane; that stretch reads MFTYKPGASSIRFIRIFE. The helical transmembrane segment at 219-239 threads the bilayer; the sequence is CFVAVLVVGVCICFAIELAYI. Residues 240–266 are Cytoplasmic-facing; the sequence is PKSTSVKQVFRGFVPSAQMFDHNGIYT. Residues 267-287 traverse the membrane as a helical segment; sequence AISILGATVMPHSLFLGSALV. Residues 288 to 344 lie on the Extracellular side of the membrane; that stretch reads QPRLLDYDVKHGNYTVSEEQDKVKKSKSTEEIMEEKYFNYRPTNAAIKYCMKYSMVE. The chain crosses the membrane as a helical span at residues 345–365; the sequence is LSITLFTLALFVNCAILVVAG. Over 366 to 396 the chain is Cytoplasmic; that stretch reads STLYNSPEADGADLFTIHELLSRNLAPAAGT. Residues 397 to 417 form a helical membrane-spanning segment; the sequence is IFMLALLLSGQSAGVVCTMSG. Residues 418-463 are Extracellular-facing; sequence QIVSEGHINWKLQPWQRRLATRCISIIPCLVISICIGREALSKALN. The chain crosses the membrane as a helical span at residues 464–484; sequence ASQVVLSIVLPFLVAPLIFFT. Residues 485–543 are Cytoplasmic-facing; sequence CKKSIMKTEITVDHTEEDSHNHQNNNDRSAGSVIEQDGSSGMEIENGKDVKIVYMANNW. A disordered region spans residues 498–517; the sequence is HTEEDSHNHQNNNDRSAGSV. Residues 544–564 form a helical membrane-spanning segment; it reads IITVIAIIVWLFLSLLNVYAI. The Extracellular segment spans residues 565–575; it reads VQLGMSHGDIS.

Belongs to the NRAMP family.

The protein resides in the cell membrane. It carries out the reaction Mn(2+)(in) = Mn(2+)(out). Its function is as follows. High-affinity manganese transporter involved in manganese uptake from the extracellular environment. Also contributes to cellular accumulation of other divalent metal ions such as cadmium, cobalt, copper, iron and nickel. The sequence is that of Manganese transporter SMF1 (SMF1) from Saccharomyces cerevisiae (strain ATCC 204508 / S288c) (Baker's yeast).